The following is a 1416-amino-acid chain: Non-structural polyprotein 1AB (1416 aa).

A coiled-coil region spans residues K104–K146. A run of 5 helical transmembrane segments spans residues M154–A174, V239–G259, V286–V306, L313–M333, and G344–T364. Catalysis depends on charge relay system; for serine protease activity residues H461, D489, and S551. A coiled-coil region spans residues V587–P614. Y693 bears the O-(5'-phospho-RNA)-tyrosine mark. The interval N752 to G815 is disordered. Positions S783 to Q795 are enriched in basic and acidic residues. Residues N805–Y814 are compositionally biased toward polar residues. Residues K1161–E1287 enclose the RdRp catalytic domain.

It belongs to the astroviridae polyprotein 1AB family. As to quaternary structure, monomer. Cleaved by the viral and host proteases. The protease is probably autocatalytically cleaved.

It is found in the host membrane. It carries out the reaction RNA(n) + a ribonucleoside 5'-triphosphate = RNA(n+1) + diphosphate. Functionally, responsible for the cleavage of the polyprotein into functional products. Protein covalently attached to the 5' extremity of the genomic and subgenomic RNAs. It may serve as a primer for the replicase. The chain is Non-structural polyprotein 1AB (ORF1) from Homo sapiens (Human).